The chain runs to 86 residues: Small ribosomal subunit protein bS20 (86 aa).

A disordered region spans residues 1 to 27; sequence MANNKSAKKRAIQAEKRRQHNASRRSM.

It belongs to the bacterial ribosomal protein bS20 family.

Binds directly to 16S ribosomal RNA. This Vibrio cholerae serotype O1 (strain ATCC 39541 / Classical Ogawa 395 / O395) protein is Small ribosomal subunit protein bS20.